Consider the following 266-residue polypeptide: Probable septum site-determining protein MinC (266 aa).

The disordered stretch occupies residues 98-146; sequence ILKGGRPVSDVDVPKVEPESPPAEEKKKTGKATKASGKSDEIGETDSPQ. Residues 109-124 show a composition bias toward basic and acidic residues; sequence DVPKVEPESPPAEEKK.

Belongs to the MinC family. In terms of assembly, interacts with MinD and FtsZ.

Functionally, cell division inhibitor that blocks the formation of polar Z ring septums. Rapidly oscillates between the poles of the cell to destabilize FtsZ filaments that have formed before they mature into polar Z rings. Prevents FtsZ polymerization. The polypeptide is Probable septum site-determining protein MinC (Allorhizobium ampelinum (strain ATCC BAA-846 / DSM 112012 / S4) (Agrobacterium vitis (strain S4))).